The primary structure comprises 138 residues: Ribosome-binding factor A (138 aa).

Residues Asp-119 to Asp-138 are disordered.

The protein belongs to the RbfA family. In terms of assembly, monomer. Binds 30S ribosomal subunits, but not 50S ribosomal subunits or 70S ribosomes.

It localises to the cytoplasm. One of several proteins that assist in the late maturation steps of the functional core of the 30S ribosomal subunit. Associates with free 30S ribosomal subunits (but not with 30S subunits that are part of 70S ribosomes or polysomes). Required for efficient processing of 16S rRNA. May interact with the 5'-terminal helix region of 16S rRNA. The polypeptide is Ribosome-binding factor A (Alkaliphilus metalliredigens (strain QYMF)).